Reading from the N-terminus, the 408-residue chain is MKTTTYSLLALAAASKLASAHTTVQAVWINGEDQGLGNTDDGYIRSPPSNSPVTDVTSTDMTCNVNGDQAASKTLSVKAGDVVTFEWHHSDRSDSDDIIASSHKGPVQVYMAPTAKGSNGNNWVKIAEDGYHKSSDEWATDILIANKGKHNITVPDVPAGNYLFRPEIIALHEGNREGGAQFYMECVQFKVTSDGSNELPSGVSIPGVYTATDPGILFDIYNSFDSYPIPGPDVWDGSSSGSSSSGSSSAAVSSAAAAATTSAVAATTPATQAAVEVSSSAAAATTEAAAPVVSSAAPVQQATSAVTSQAQAAPTTFATSSKKSSKTACKNKTKSNSQVAAATSSVVAPAATSSVVPVVSASASASAGGVAKQYERCGGINHTGPTTCESGSVCKKWNPYYYQCVASQ.

The N-terminal stretch at 1-20 (MKTTTYSLLALAAASKLASA) is a signal peptide. Positions 21 and 103 each coordinate Cu(2+). A disulfide bridge links Cys63 with Cys186. Asn151 carries an N-linked (GlcNAc...) asparagine glycan. His172 is an O2 binding site. Residue Tyr183 participates in Cu(2+) binding. Residues Asn331 and Asn381 are each glycosylated (N-linked (GlcNAc...) asparagine). Residues 369-405 (GVAKQYERCGGINHTGPTTCESGSVCKKWNPYYYQCV) enclose the CBM1 domain.

It belongs to the polysaccharide monooxygenase AA9 family. The cofactor is Cu(2+).

The protein localises to the secreted. It catalyses the reaction [(1-&gt;4)-beta-D-glucosyl]n+m + reduced acceptor + O2 = 4-dehydro-beta-D-glucosyl-[(1-&gt;4)-beta-D-glucosyl]n-1 + [(1-&gt;4)-beta-D-glucosyl]m + acceptor + H2O.. Functionally, lytic polysaccharide monooxygenase (LPMO) that depolymerizes crystalline and amorphous polysaccharides via the oxidation of scissile alpha- or beta-(1-4)-glycosidic bonds, yielding C4 oxidation products. Catalysis by LPMOs requires the reduction of the active-site copper from Cu(II) to Cu(I) by a reducing agent and H(2)O(2) or O(2) as a cosubstrate. The protein is AA9 family lytic polysaccharide monooxygenase A (eglD) of Aspergillus kawachii (strain NBRC 4308) (White koji mold).